A 503-amino-acid polypeptide reads, in one-letter code: ATP synthase subunit alpha (503 aa).

G170–T177 is a binding site for ATP.

It belongs to the ATPase alpha/beta chains family. In terms of assembly, F-type ATPases have 2 components, CF(1) - the catalytic core - and CF(0) - the membrane proton channel. CF(1) has five subunits: alpha(3), beta(3), gamma(1), delta(1), epsilon(1). CF(0) has three main subunits: a(1), b(2) and c(9-12). The alpha and beta chains form an alternating ring which encloses part of the gamma chain. CF(1) is attached to CF(0) by a central stalk formed by the gamma and epsilon chains, while a peripheral stalk is formed by the delta and b chains.

The protein localises to the cell inner membrane. The catalysed reaction is ATP + H2O + 4 H(+)(in) = ADP + phosphate + 5 H(+)(out). Functionally, produces ATP from ADP in the presence of a proton gradient across the membrane. The alpha chain is a regulatory subunit. This chain is ATP synthase subunit alpha, found in Pseudothermotoga lettingae (strain ATCC BAA-301 / DSM 14385 / NBRC 107922 / TMO) (Thermotoga lettingae).